The sequence spans 317 residues: Acetyl-coenzyme A carboxylase carboxyl transferase subunit alpha (317 aa).

The CoA carboxyltransferase C-terminal domain maps to 39 to 293; the sequence is KLEAKAQKAL…KEAVVEALGA (255 aa).

It belongs to the AccA family. In terms of assembly, acetyl-CoA carboxylase is a heterohexamer composed of biotin carboxyl carrier protein (AccB), biotin carboxylase (AccC) and two subunits each of ACCase subunit alpha (AccA) and ACCase subunit beta (AccD).

The protein resides in the cytoplasm. The catalysed reaction is N(6)-carboxybiotinyl-L-lysyl-[protein] + acetyl-CoA = N(6)-biotinyl-L-lysyl-[protein] + malonyl-CoA. It participates in lipid metabolism; malonyl-CoA biosynthesis; malonyl-CoA from acetyl-CoA: step 1/1. Functionally, component of the acetyl coenzyme A carboxylase (ACC) complex. First, biotin carboxylase catalyzes the carboxylation of biotin on its carrier protein (BCCP) and then the CO(2) group is transferred by the carboxyltransferase to acetyl-CoA to form malonyl-CoA. The chain is Acetyl-coenzyme A carboxylase carboxyl transferase subunit alpha from Beijerinckia indica subsp. indica (strain ATCC 9039 / DSM 1715 / NCIMB 8712).